Consider the following 497-residue polypeptide: Probable malate:quinone oxidoreductase (497 aa).

This sequence belongs to the MQO family. FAD is required as a cofactor.

The catalysed reaction is (S)-malate + a quinone = a quinol + oxaloacetate. It participates in carbohydrate metabolism; tricarboxylic acid cycle; oxaloacetate from (S)-malate (quinone route): step 1/1. The sequence is that of Probable malate:quinone oxidoreductase from Flavobacterium johnsoniae (strain ATCC 17061 / DSM 2064 / JCM 8514 / BCRC 14874 / CCUG 350202 / NBRC 14942 / NCIMB 11054 / UW101) (Cytophaga johnsonae).